A 131-amino-acid polypeptide reads, in one-letter code: D-ribose pyranase (131 aa).

The active-site Proton donor is His-20. Substrate contacts are provided by residues Asp-28, His-98, and 120–122; that span reads YAN.

This sequence belongs to the RbsD / FucU family. RbsD subfamily. Homodecamer.

The protein resides in the cytoplasm. It carries out the reaction beta-D-ribopyranose = beta-D-ribofuranose. It participates in carbohydrate metabolism; D-ribose degradation; D-ribose 5-phosphate from beta-D-ribopyranose: step 1/2. In terms of biological role, catalyzes the interconversion of beta-pyran and beta-furan forms of D-ribose. The polypeptide is D-ribose pyranase (Symbiobacterium thermophilum (strain DSM 24528 / JCM 14929 / IAM 14863 / T)).